The following is a 397-amino-acid chain: Elongation factor Tu (397 aa).

Residues 10 to 206 form the tr-type G domain; the sequence is KPHVNIGTIG…AVDENIPQPE (197 aa). Residues 19 to 26 form a G1 region; sequence GHVDHGKT. Position 19 to 26 (19 to 26) interacts with GTP; the sequence is GHVDHGKT. Mg(2+) is bound at residue T26. The tract at residues 62 to 66 is G2; the sequence is GITIS. Residues 83–86 form a G3 region; that stretch reads DCPG. GTP-binding positions include 83–87 and 138–141; these read DCPGH and NKAD. The G4 stretch occupies residues 138-141; it reads NKAD. The interval 176-178 is G5; sequence SAL.

The protein belongs to the TRAFAC class translation factor GTPase superfamily. Classic translation factor GTPase family. EF-Tu/EF-1A subfamily. As to quaternary structure, monomer.

Its subcellular location is the cytoplasm. The catalysed reaction is GTP + H2O = GDP + phosphate + H(+). Its function is as follows. GTP hydrolase that promotes the GTP-dependent binding of aminoacyl-tRNA to the A-site of ribosomes during protein biosynthesis. The sequence is that of Elongation factor Tu from Streptomyces cinnamoneus (Streptoverticillium cinnamoneum).